The primary structure comprises 72 residues: VKRPMNAFMVWSQNERRKIMDQWPDMHNAEISERLGRRWQLLQDSEKIPFVKEAGRLRLKHMADYPDYKYRP.

A DNA-binding region (HMG box) is located at residues 1 to 69 (VKRPMNAFMV…KHMADYPDYK (69 aa)).

Its subcellular location is the nucleus. This is SRY-related protein MG43 from Tarentola mauritanica (Common wall gecko).